The chain runs to 798 residues: Serine/threonine-protein kinase SIK2 (798 aa).

Positions 26–277 constitute a Protein kinase domain; it reads YDIERTLGKG…ISQIKQHKWM (252 aa). Residues 32–40 and Lys55 each bind ATP; that span reads LGKGNFAVV. Asp148 functions as the Proton acceptor in the catalytic mechanism. Phosphothreonine is present on Thr181. The residue at position 185 (Ser185) is a Phosphoserine. Residues 302–342 form the UBA domain; sequence DYNEQVLGIMQTLGIDRQRTVESLQNSSYNHFAAIYYLLLE. Polar residues predominate over residues 351 to 361; the sequence is QLSSRPATGRQ. The segment at 351-382 is disordered; the sequence is QLSSRPATGRQQRPRSSEISNAEMPQDSLTSE. At Ser575 the chain carries Phosphoserine. Positions 672-691 are disordered; sequence ACPQTSQTSATNGLPPSDSA. Positions 673 to 685 are enriched in polar residues; it reads CPQTSQTSATNGL.

This sequence belongs to the protein kinase superfamily. CAMK Ser/Thr protein kinase family. SNF1 subfamily. Mg(2+) is required as a cofactor. Post-translationally, phosphorylated at Thr-181 by STK11/LKB1 in complex with STE20-related adapter-alpha (STRADA) pseudo kinase and CAB39. As to expression, ubiquitously expressed in embryonic tissue.

The protein resides in the cytoplasm. It catalyses the reaction L-seryl-[protein] + ATP = O-phospho-L-seryl-[protein] + ADP + H(+). The catalysed reaction is L-threonyl-[protein] + ATP = O-phospho-L-threonyl-[protein] + ADP + H(+). With respect to regulation, activated by phosphorylation on Thr-181. Phosphorylates IRS1 in insulin-stimulated adipocytes, potentially modulating the efficiency of insulin signal transduction. Inhibits CREB activity by phosphorylating and repressing the CREB-specific coactivators, CRTC1-3. This is Serine/threonine-protein kinase SIK2 (SIK2) from Gallus gallus (Chicken).